A 351-amino-acid polypeptide reads, in one-letter code: S-adenosylmethionine:tRNA ribosyltransferase-isomerase (351 aa).

The protein belongs to the QueA family. As to quaternary structure, monomer.

It localises to the cytoplasm. It catalyses the reaction 7-aminomethyl-7-carbaguanosine(34) in tRNA + S-adenosyl-L-methionine = epoxyqueuosine(34) in tRNA + adenine + L-methionine + 2 H(+). Its pathway is tRNA modification; tRNA-queuosine biosynthesis. Transfers and isomerizes the ribose moiety from AdoMet to the 7-aminomethyl group of 7-deazaguanine (preQ1-tRNA) to give epoxyqueuosine (oQ-tRNA). The sequence is that of S-adenosylmethionine:tRNA ribosyltransferase-isomerase from Hydrogenovibrio crunogenus (strain DSM 25203 / XCL-2) (Thiomicrospira crunogena).